Reading from the N-terminus, the 631-residue chain is Shootin-1 (631 aa).

An N-acetylmethionine modification is found at Met1. Residues Ser3 and Ser4 each carry the phosphoserine modification. The stretch at 7–353 forms a coiled coil; sequence EKQLQLITSL…RVNQSENSVP (347 aa). Residue Ser101 is modified to Phosphoserine; by PAK1. Position 249 is a phosphoserine (Ser249). Disordered regions lie at residues 343-404 and 417-508; these read KRVN…EVTD and IKKG…KSMP. A compositionally biased stretch (pro residues) spans 352–369; the sequence is VPPPPPPPPPLPPPPPNP. Phosphoserine is present on Ser375. Polar residues predominate over residues 456 to 465; the sequence is LNKSTSSRSL. Residue Ser473 is modified to Phosphoserine. At Thr487 the chain carries Phosphothreonine. Residues 490–505 show a composition bias toward polar residues; it reads ADSSSPTGILATSESK. Ser494 bears the Phosphoserine mark. The residue at position 496 (Thr496) is a Phosphothreonine. Residues Ser506 and Ser515 each carry the phosphoserine modification. The segment at 530–631 is disordered; that stretch reads FNNPCPLTPE…KTGETDSSNC (102 aa). Position 537 is a phosphothreonine (Thr537). Basic and acidic residues predominate over residues 590 to 602; sequence PQTKDQAAEKDPT.

It belongs to the shootin family. As to quaternary structure, interacts with L1CAM; this interaction occurs at axonal growth cones. Interacts with actin filament retrograde flow; this interaction is enhanced in a netrin-1- and PAK1-dependent manner and promotes F-actin-substrate coupling and concomitant formation of traction forces at axonal growth cones. Interacts with RUFY3. Interacts with PFN2. Interacts (via N-terminus) with KIF20B; this interaction is direct and promotes the association of SHTN1 to microtubules in primary neurons. Associates with microtubule. Phosphorylated on Ser-101 and Ser-249 by PAK1 through a CDC42- and RAC1-dependent signaling pathway, which enhances its association with F-actin retrograde flow in filopodia and lamellipodia of axonal growth cones. Phosphorylation on Ser-101 and Ser-249 is increased by netrin-1. As to expression, expressed in hippocampal neurons.

It localises to the perikaryon. It is found in the cell projection. The protein localises to the axon. Its subcellular location is the growth cone. The protein resides in the cytoplasm. It localises to the cytoskeleton. It is found in the filopodium. The protein localises to the lamellipodium. In terms of biological role, involved in the generation of internal asymmetric signals required for neuronal polarization and neurite outgrowth. Mediates netrin-1-induced F-actin-substrate coupling or 'clutch engagement' within the axon growth cone through activation of CDC42, RAC1 and PAK1-dependent signaling pathway, thereby converting the F-actin retrograde flow into traction forces, concomitantly with filopodium extension and axon outgrowth. Plays a role in cytoskeletal organization by regulating the subcellular localization of phosphoinositide 3-kinase (PI3K) activity at the axonal growth cone. Also plays a role in regenerative neurite outgrowth. In the developing cortex, cooperates with KIF20B to promote both the transition from the multipolar to the bipolar stage and the radial migration of cortical neurons from the ventricular zone toward the superficial layer of the neocortex. Involved in the accumulation of phosphatidylinositol 3,4,5-trisphosphate (PIP3) in the growth cone of primary hippocampal neurons. This chain is Shootin-1, found in Mus musculus (Mouse).